Consider the following 255-residue polypeptide: U2 small nuclear ribonucleoprotein A' (255 aa).

4 LRR repeats span residues 20–41 (RDRE…GATL), 43–64 (QFDA…PLLR), 65–86 (RLKT…LDQA), and 89–110 (CLTE…DPLA). One can recognise an LRRCT domain in the interval 123–161 (NPVTNKKHYRLYVIYKVPQVRVLDFQKVKLKERQEAEKM). K172 is modified (N6-acetyllysine; alternate). K172 participates in a covalent cross-link: Glycyl lysine isopeptide (Lys-Gly) (interchain with G-Cter in SUMO2); alternate. A disordered region spans residues 174–201 (IARRSKTFNPGAGLPTDKKKGGPSPGDV). Phosphoserine occurs at positions 178 and 197. Residue K221 forms a Glycyl lysine isopeptide (Lys-Gly) (interchain with G-Cter in SUMO2) linkage. Residues 222–255 (GLLQSGQIPGRERRSGPTDDGEEEMEEDTVTNGS) are disordered. Residues S236 and S255 each carry the phosphoserine modification. The span at 240 to 255 (DDGEEEMEEDTVTNGS) shows a compositional bias: acidic residues.

Belongs to the U2 small nuclear ribonucleoprotein A family. Identified in the spliceosome B complex. Identified in the spliceosome C complex. Found in a pre-mRNA splicing complex with SFRS4, SFRS5, SNRNP70, SNRPA1, SRRM1 and SRRM2. Found in a pre-mRNA exonic splicing enhancer (ESE) complex with SNRNP70, SNRPA1, SRRM1 and TRA2B. Contributes to the binding of stem loop IV of U2 snRNA with SNRPB2.

The protein localises to the nucleus. Its function is as follows. Involved in pre-mRNA splicing as component of the spliceosome. Associated with sn-RNP U2, where it contributes to the binding of stem loop IV of U2 snRNA. The polypeptide is U2 small nuclear ribonucleoprotein A' (SNRPA1) (Homo sapiens (Human)).